Here is a 624-residue protein sequence, read N- to C-terminus: LRR receptor kinase BAK1 (624 aa).

An N-terminal signal peptide occupies residues 1–25 (MAAHRWAVWAVLLLRLLVPAARVLA). Residues 26–237 (NMEGDALHSL…QSPGSSSSTG (212 aa)) are Extracellular-facing. LRR repeat units follow at residues 91–115 (LKNL…LGNL), 117–139 (NLVS…LGNL), 140–163 (LKLR…LTAI), and 164–188 (TALQ…SFSL). N-linked (GlcNAc...) asparagine glycosylation is found at Asn103, Asn114, Asn127, Asn149, and Asn175. The segment at 205–236 (TTKPCPGAPPFSPPPPYNPPTPVQSPGSSSST) is disordered. Positions 210 to 227 (PGAPPFSPPPPYNPPTPV) are enriched in pro residues. Residues 238-258 (AIAGGVAAGAALLFAIPAIGF) form a helical membrane-spanning segment. The Cytoplasmic portion of the chain corresponds to 259–624 (AWYRRRKPQE…LHAVELSGPR (366 aa)). A Protein kinase domain is found at 301-588 (FSNKNILGRG…GLAERWEEWQ (288 aa)). ATP is bound by residues 307-315 (LGRGGFGKV) and Lys329. The active-site Proton acceptor is the Asp428.

The protein belongs to the protein kinase superfamily. Ser/Thr protein kinase family. Forms homodimers. Interacts with BRI1. Interacts with REM4.1. In terms of tissue distribution, expressed in developing lateral roots, shoot apex, leaf blades, lamina joints and flowers. Expressed at low levels in leaf sheaths and panicles.

Its subcellular location is the cell membrane. The catalysed reaction is L-seryl-[protein] + ATP = O-phospho-L-seryl-[protein] + ADP + H(+). The enzyme catalyses L-threonyl-[protein] + ATP = O-phospho-L-threonyl-[protein] + ADP + H(+). LRR receptor kinase involved in defense response. Does not seem to be required specifically for XA21-mediated immunity or basal resistance to Xanthomonas oryzae pv. oryzae (Xoo), or immunity to Magnaporthe oryzae. Involved in brassinosteroid (BR) signaling pathway. Acts as a coreceptor of BRI1. Forms at the plasma membrane a receptor complex with BRI1 which is activated in response to brassinolide. Phosphorylates BRI1. Required for normal plant growth and leaf development. Possesses kinase activity in vitro. This Oryza sativa subsp. japonica (Rice) protein is LRR receptor kinase BAK1.